Here is a 407-residue protein sequence, read N- to C-terminus: Nicotinate phosphoribosyltransferase (407 aa).

Phosphohistidine; by autocatalysis is present on H224.

It belongs to the NAPRTase family. In terms of processing, transiently phosphorylated on a His residue during the reaction cycle. Phosphorylation strongly increases the affinity for substrates and increases the rate of nicotinate D-ribonucleotide production. Dephosphorylation regenerates the low-affinity form of the enzyme, leading to product release.

The catalysed reaction is nicotinate + 5-phospho-alpha-D-ribose 1-diphosphate + ATP + H2O = nicotinate beta-D-ribonucleotide + ADP + phosphate + diphosphate. It functions in the pathway cofactor biosynthesis; NAD(+) biosynthesis; nicotinate D-ribonucleotide from nicotinate: step 1/1. Functionally, catalyzes the synthesis of beta-nicotinate D-ribonucleotide from nicotinate and 5-phospho-D-ribose 1-phosphate at the expense of ATP. This is Nicotinate phosphoribosyltransferase from Pseudomonas syringae pv. tomato (strain ATCC BAA-871 / DC3000).